A 695-amino-acid chain; its full sequence is Putative ATP-dependent DNA helicase R568 (695 aa).

In terms of domain architecture, UvrD-like helicase ATP-binding spans 86-499 (KFSEEQIKYI…FRNEEIFDSN (414 aa)). Residue 107–114 (ACAGSGKT) participates in ATP binding.

It belongs to the helicase family. UvrD subfamily.

The enzyme catalyses Couples ATP hydrolysis with the unwinding of duplex DNA by translocating in the 3'-5' direction.. The catalysed reaction is ATP + H2O = ADP + phosphate + H(+). In terms of biological role, ATP-dependent DNA helicase. In Acanthamoeba polyphaga mimivirus (APMV), this protein is Putative ATP-dependent DNA helicase R568.